The primary structure comprises 341 residues: tRNA N6-adenosine threonylcarbamoyltransferase (341 aa).

Fe cation-binding residues include H111 and H115. Substrate-binding positions include 134–138, D167, G180, and N276; that span reads LVSGG. D304 provides a ligand contact to Fe cation.

It belongs to the KAE1 / TsaD family. It depends on Fe(2+) as a cofactor.

It is found in the cytoplasm. The catalysed reaction is L-threonylcarbamoyladenylate + adenosine(37) in tRNA = N(6)-L-threonylcarbamoyladenosine(37) in tRNA + AMP + H(+). Its function is as follows. Required for the formation of a threonylcarbamoyl group on adenosine at position 37 (t(6)A37) in tRNAs that read codons beginning with adenine. Is involved in the transfer of the threonylcarbamoyl moiety of threonylcarbamoyl-AMP (TC-AMP) to the N6 group of A37, together with TsaE and TsaB. TsaD likely plays a direct catalytic role in this reaction. The polypeptide is tRNA N6-adenosine threonylcarbamoyltransferase (Pseudomonas syringae pv. tomato (strain ATCC BAA-871 / DC3000)).